We begin with the raw amino-acid sequence, 187 residues long: Ribose 1,5-bisphosphate phosphokinase PhnN (187 aa).

9-16 (GPSGSGKD) serves as a coordination point for ATP.

It belongs to the ribose 1,5-bisphosphokinase family.

It carries out the reaction alpha-D-ribose 1,5-bisphosphate + ATP = 5-phospho-alpha-D-ribose 1-diphosphate + ADP. It participates in metabolic intermediate biosynthesis; 5-phospho-alpha-D-ribose 1-diphosphate biosynthesis; 5-phospho-alpha-D-ribose 1-diphosphate from D-ribose 5-phosphate (route II): step 3/3. Catalyzes the phosphorylation of ribose 1,5-bisphosphate to 5-phospho-D-ribosyl alpha-1-diphosphate (PRPP). The chain is Ribose 1,5-bisphosphate phosphokinase PhnN from Desulfomicrobium baculatum (strain DSM 4028 / VKM B-1378 / X) (Desulfovibrio baculatus).